A 257-amino-acid polypeptide reads, in one-letter code: uncharacterized protein (257 aa).

The N-terminal stretch at 1–22 is a signal peptide; that stretch reads MIHSKRLRLWLYLVLLAVFIGA. Residue C23 is the site of N-palmitoyl cysteine attachment. C23 carries the S-diacylglycerol cysteine lipid modification.

It belongs to the staphylococcal tandem lipoprotein family.

The protein localises to the cell membrane. This is an uncharacterized protein from Staphylococcus aureus (strain NCTC 8325 / PS 47).